Reading from the N-terminus, the 280-residue chain is uncharacterized protein (280 aa).

A signal peptide spans 1 to 26 (MNILIKSAVKNFIVFSTALYTSFSFA).

To E.coli YibQ.

This is an uncharacterized protein from Haemophilus influenzae (strain ATCC 51907 / DSM 11121 / KW20 / Rd).